The primary structure comprises 351 residues: MKQEPHRQSEEKEKPKGPMAVEREQHTSLSSGTTVTASTGDESTNSRPVESSQTEKSLSLRIRILKQLGFDDIQELNACDTGLVEQFLNVRLINDTKELEKIRESNLAKLNQIIDKCMESDKISDSTLNKILDMSMNRDTNNDNNNHLTIPSPITTKKRKINASELASPRGHRRYRSDIPTVSEVETGVGYPQIHQQPGAYTLPMPANQWMSNPYMQPPQPQVQQIMPQYLYPPGMGPQAQLPTMSSNSESQTPVMSSQFLSLNQHGLYQQNIGAHPVMSMGPQANIYGQQHQLQPGQERDQSRKSFSHRRSQSANISMANFRSPMRNPQPASSQRPVNFLIHTPKHPPPT.

Residues 1–26 (MKQEPHRQSEEKEKPKGPMAVEREQH) show a composition bias toward basic and acidic residues. Residues 1–56 (MKQEPHRQSEEKEKPKGPMAVEREQHTSLSSGTTVTASTGDESTNSRPVESSQTEK) form a disordered region. Residues 27–56 (TSLSSGTTVTASTGDESTNSRPVESSQTEK) are compositionally biased toward polar residues. Residues Ser152 and Ser168 each carry the phosphoserine modification. 2 disordered regions span residues 234-256 (PGMG…TPVM) and 291-351 (QHQL…PPPT). Over residues 241 to 256 (QLPTMSSNSESQTPVM) the composition is skewed to polar residues. Ser314 bears the Phosphoserine mark.

This sequence belongs to the POG1 family. Post-translationally, phosphorylated by CDC28.

It is found in the nucleus. Transcriptional activator which promotes cell cycle recovery with CLN2, after pheromone induced G1 arrest, probably inhibiting the ability of STE20 to activate the pheromone response pathway. Binds the promoters of genes that function in cell cycle regulation, cytoskeletal organization, and spindle assembly. May also be involved in stress-resistance. The polypeptide is Transcriptional activator POG1 (POG1) (Saccharomyces cerevisiae (strain ATCC 204508 / S288c) (Baker's yeast)).